Here is a 470-residue protein sequence, read N- to C-terminus: Choline/ethanolamine transporter flvcr2a (470 aa).

Residues 1 to 23 (MCDKADNHIDVQPEGNLEVSSVS) lie on the Cytoplasmic side of the membrane. The chain crosses the membrane as a helical span at residues 24 to 48 (STRLYRRRWVILLLFSSYSLCNAFQ). Choline-binding residues include asparagine 45, alanine 46, and tryptophan 49. At 49–66 (WIQYGIINNIFMKFYQVS) the chain is on the extracellular side. Residues 67 to 94 (SFAVDWLSMVYMLTYIPFIFPVTWLLER) form a helical membrane-spanning segment. The Cytoplasmic segment spans residues 95-96 (KG). A helical membrane pass occupies residues 97 to 116 (LRVVALLAASINCAGTWIKV). Residues 117-123 (ASVQPSL) lie on the Extracellular side of the membrane. Residues 124–152 (FWVTMLGQFACSCAQVFILGMPSQVASVW) form a helical membrane-spanning segment. 2 residues coordinate choline: glutamine 138 and leucine 142. Residues 153 to 157 (FGSDE) lie on the Cytoplasmic side of the membrane. A helical transmembrane segment spans residues 158–183 (VSTACAIGVFGNQLGIAIGFLVPPVL). Over 184-188 (VPNVE) the chain is Extracellular. Residues 189 to 218 (DMGELAEHISIMFYITAAVATLIFLLVVFV) form a helical membrane-spanning segment. The Cytoplasmic portion of the chain corresponds to 219 to 254 (FQEKPETPPSLAQVALRNMPTGQHSYLASIARLMCN). The helical transmembrane segment at 255 to 285 (KPFILLLISYGLNVGSFYAVSTLLNRMIIEH) threads the bilayer. Tyrosine 272 is a binding site for choline. Residues 286–289 (YPGE) are Extracellular-facing. The helical transmembrane segment at 290–318 (EVNAGRIGLTLVVAGVVGSLICGVWLDKT) threads the bilayer. Over 319-320 (KT) the chain is Cytoplasmic. The chain crosses the membrane as a helical span at residues 321-343 (YKQTTLSVYLLSFVGMLIYSFTL). Residues 344–346 (NLG) are Extracellular-facing. Residues 347 to 376 (HLWLVFLTSGVLGFFMTGYLPLGFEFAVEL) form a helical membrane-spanning segment. Over 377–384 (TYPESEGT) the chain is Cytoplasmic. Residues 385–410 (SSGLLNCSAQVFGIAFTIIQGKIIDH) traverse the membrane as a helical segment. Glutamine 394 is a choline binding site. The Extracellular portion of the chain corresponds to 411–412 (FG). A helical membrane pass occupies residues 413 to 435 (TLAGNIFLCVFLLIGSIMTAFIK). At 436–470 (SDLRRQKANQETGGNADSSVHPQHGETLPVKEVKM) the chain is on the cytoplasmic side. Over residues 445-456 (QETGGNADSSVH) the composition is skewed to polar residues. Residues 445–470 (QETGGNADSSVHPQHGETLPVKEVKM) are disordered.

It belongs to the major facilitator superfamily. Feline leukemia virus subgroup C receptor (TC 2.A.1.28.1) family.

Its subcellular location is the cell membrane. The protein localises to the mitochondrion membrane. The protein resides in the endoplasmic reticulum membrane. It catalyses the reaction choline(out) = choline(in). It carries out the reaction ethanolamine(in) = ethanolamine(out). The enzyme catalyses heme b(in) = heme b(out). Choline uniporter that specifically mediates choline uptake at the blood-brain-barrier. Responsible for the majority of choline uptake across the blood-brain-barrier from the circulation into the brain. Choline, a nutrient critical for brain development, is a precursor of phosphatidylcholine, as well as betaine. Also mediates transport of ethanolamine. Choline and ethanolamine transport is not coupled with proton transport and is exclusively driven by the choline gradient across the plasma membrane. Also acts as a heme b transporter. The protein is Choline/ethanolamine transporter flvcr2a of Danio rerio (Zebrafish).